The primary structure comprises 397 residues: Oxygen-dependent coproporphyrinogen-III oxidase, chloroplastic (397 aa).

The tract at residues 76 to 95 is disordered; it reads ESDMGSNVTSNSSSVRGRFE. Over residues 79 to 90 the composition is skewed to polar residues; sequence MGSNVTSNSSSV. An important for dimerization region spans residues 135 to 144; that stretch reads VLQDGAVFEK. Ser-185 provides a ligand contact to substrate. His-199 serves as the catalytic Proton donor. Residues 201 to 203 and 355 to 360 contribute to the substrate site; these read NYR and GGRIES. Residues 337–372 are important for dimerization; that stretch reads YVEFNLVYDRGTTFGLKTGGRIESILVSLPLTARWE.

The protein belongs to the aerobic coproporphyrinogen-III oxidase family. As to quaternary structure, homodimer.

The protein resides in the plastid. The protein localises to the chloroplast. It carries out the reaction coproporphyrinogen III + O2 + 2 H(+) = protoporphyrinogen IX + 2 CO2 + 2 H2O. The protein operates within porphyrin-containing compound metabolism; protoporphyrin-IX biosynthesis; protoporphyrinogen-IX from coproporphyrinogen-III (O2 route): step 1/1. Involved in the heme and chlorophyll biosynthesis. Catalyzes the aerobic oxidative decarboxylation of propionate groups of rings A and B of coproporphyrinogen-III to yield the vinyl groups in protoporphyrinogen-IX. The sequence is that of Oxygen-dependent coproporphyrinogen-III oxidase, chloroplastic (CPX) from Nicotiana tabacum (Common tobacco).